The primary structure comprises 55 residues: ATP synthase F(0) complex subunit 8 (55 aa).

The helical transmembrane segment at 8-24 (PWFSIMVMTWLTLALLI) threads the bilayer. A disordered region spans residues 35-55 (NPPSKKPSLITKPTPWAWPWT).

Belongs to the ATPase protein 8 family. In terms of assembly, component of the ATP synthase complex composed at least of ATP5F1A/subunit alpha, ATP5F1B/subunit beta, ATP5MC1/subunit c (homooctomer), MT-ATP6/subunit a, MT-ATP8/subunit 8, ATP5ME/subunit e, ATP5MF/subunit f, ATP5MG/subunit g, ATP5MK/subunit k, ATP5MJ/subunit j, ATP5F1C/subunit gamma, ATP5F1D/subunit delta, ATP5F1E/subunit epsilon, ATP5PF/subunit F6, ATP5PB/subunit b, ATP5PD/subunit d, ATP5PO/subunit OSCP. ATP synthase complex consists of a soluble F(1) head domain (subunits alpha(3) and beta(3)) - the catalytic core - and a membrane F(0) domain - the membrane proton channel (subunits c, a, 8, e, f, g, k and j). These two domains are linked by a central stalk (subunits gamma, delta, and epsilon) rotating inside the F1 region and a stationary peripheral stalk (subunits F6, b, d, and OSCP).

It is found in the mitochondrion membrane. Functionally, subunit 8, of the mitochondrial membrane ATP synthase complex (F(1)F(0) ATP synthase or Complex V) that produces ATP from ADP in the presence of a proton gradient across the membrane which is generated by electron transport complexes of the respiratory chain. ATP synthase complex consist of a soluble F(1) head domain - the catalytic core - and a membrane F(1) domain - the membrane proton channel. These two domains are linked by a central stalk rotating inside the F(1) region and a stationary peripheral stalk. During catalysis, ATP synthesis in the catalytic domain of F(1) is coupled via a rotary mechanism of the central stalk subunits to proton translocation. In vivo, can only synthesize ATP although its ATP hydrolase activity can be activated artificially in vitro. Part of the complex F(0) domain. This is ATP synthase F(0) complex subunit 8 from Anas platyrhynchos (Mallard).